Consider the following 181-residue polypeptide: CD160 antigen (181 aa).

The signal sequence occupies residues 1 to 24 (MLLEPGRGCCALAILLAIVDIQSG). Residues 25-133 (GCINITSSAS…QGHFFSILFT (109 aa)) form the Ig-like V-type domain. Residue Asn28 is glycosylated (N-linked (GlcNAc...) asparagine). Intrachain disulfides connect Cys44–Cys112 and Cys61–Cys68. Asn137 carries N-linked (GlcNAc...) asparagine glycosylation. Ser159 is lipidated: GPI-anchor amidated serine. The propeptide at 160–181 (SGFLQEKVWVMLVTSLVALQAL) is removed in mature form.

In terms of assembly, homomultimer; disulfide-linked. Interacts with HLA-G. Interacts with HLA-A2-B2M in complex with an HIV-derived peptide. Interacts with TNFRSF14 (via cysteine-rich domain 1); this interaction is direct. Interacts with LCK and CD247/CD3 zeta chain. In terms of tissue distribution, expression is restricted to functional NK and cytotoxic T lymphocytes. Expressed in viral-specific effector memory and terminally differentiated effector memory CD8+ T cells. Expressed in memory and activated CD4+ T cell subsets (at protein level). Expressed at high levels in intraepithelial lymphocytes (at protein level). Expressed in both alpha-beta and gamma-delta CD8+ T cell subsets (at protein level). Expressed in umbilical vein endothelial cells (at protein level). Expressed in monocytes and at lower levels in B cells. Isoform 3: Expressed exclusively in activated NK cells (at protein level).

The protein localises to the cell membrane. Its subcellular location is the secreted. Receptor on immune cells capable to deliver stimulatory or inhibitory signals that regulate cell activation and differentiation. Exists as a GPI-anchored and as a transmembrane form, each likely initiating distinct signaling pathways via phosphoinositol 3-kinase in activated NK cells and via LCK and CD247/CD3 zeta chain in activated T cells. Receptor for both classical and non-classical MHC class I molecules. In the context of acute viral infection, recognizes HLA-C and triggers NK cell cytotoxic activity, likely playing a role in anti-viral innate immune response. On CD8+ T cells, binds HLA-A2-B2M in complex with a viral peptide and provides a costimulatory signal to activated/memory T cells. Upon persistent antigen stimulation, such as occurs during chronic viral infection, may progressively inhibit TCR signaling in memory CD8+ T cells, contributing to T cell exhaustion. On endothelial cells, recognizes HLA-G and controls angiogenesis in immune privileged sites. Receptor or ligand for TNF superfamily member TNFRSF14, participating in bidirectional cell-cell contact signaling between antigen presenting cells and lymphocytes. Upon ligation of TNFRSF14, provides stimulatory signal to NK cells enhancing IFNG production and anti-tumor immune response. On activated CD4+ T cells, interacts with TNFRSF14 and down-regulates CD28 costimulatory signaling, restricting memory and alloantigen-specific immune response. In the context of bacterial infection, acts as a ligand for TNFRSF14 on epithelial cells, triggering the production of antimicrobial proteins and pro-inflammatory cytokines. Functionally, the soluble GPI-cleaved form, usually released by activated lymphocytes, might play an immune regulatory role by limiting lymphocyte effector functions. This is CD160 antigen from Homo sapiens (Human).